Here is a 481-residue protein sequence, read N- to C-terminus: Protein nucleotidyltransferase YdiU (481 aa).

8 residues coordinate ATP: Gly-85, Gly-87, Arg-88, Lys-108, Asp-120, Gly-121, Arg-172, and Arg-179. Residue Asp-248 is the Proton acceptor of the active site. Asn-249 and Asp-258 together coordinate Mg(2+). Asp-258 lines the ATP pocket.

Belongs to the SELO family. Mg(2+) serves as cofactor. Mn(2+) is required as a cofactor.

It carries out the reaction L-seryl-[protein] + ATP = 3-O-(5'-adenylyl)-L-seryl-[protein] + diphosphate. The catalysed reaction is L-threonyl-[protein] + ATP = 3-O-(5'-adenylyl)-L-threonyl-[protein] + diphosphate. The enzyme catalyses L-tyrosyl-[protein] + ATP = O-(5'-adenylyl)-L-tyrosyl-[protein] + diphosphate. It catalyses the reaction L-histidyl-[protein] + UTP = N(tele)-(5'-uridylyl)-L-histidyl-[protein] + diphosphate. It carries out the reaction L-seryl-[protein] + UTP = O-(5'-uridylyl)-L-seryl-[protein] + diphosphate. The catalysed reaction is L-tyrosyl-[protein] + UTP = O-(5'-uridylyl)-L-tyrosyl-[protein] + diphosphate. Functionally, nucleotidyltransferase involved in the post-translational modification of proteins. It can catalyze the addition of adenosine monophosphate (AMP) or uridine monophosphate (UMP) to a protein, resulting in modifications known as AMPylation and UMPylation. The sequence is that of Protein nucleotidyltransferase YdiU from Cereibacter sphaeroides (strain KD131 / KCTC 12085) (Rhodobacter sphaeroides).